The chain runs to 338 residues: Lipoate-protein ligase A (338 aa).

Positions Pro29 to Ile216 constitute a BPL/LPL catalytic domain. ATP-binding positions include Arg71, Gly76 to Phe79, and Lys134. Lys134 contacts (R)-lipoate.

The protein belongs to the LplA family. As to quaternary structure, monomer.

The protein resides in the cytoplasm. The enzyme catalyses L-lysyl-[lipoyl-carrier protein] + (R)-lipoate + ATP = N(6)-[(R)-lipoyl]-L-lysyl-[lipoyl-carrier protein] + AMP + diphosphate + H(+). It functions in the pathway protein modification; protein lipoylation via exogenous pathway; protein N(6)-(lipoyl)lysine from lipoate: step 1/2. Its pathway is protein modification; protein lipoylation via exogenous pathway; protein N(6)-(lipoyl)lysine from lipoate: step 2/2. In terms of biological role, catalyzes both the ATP-dependent activation of exogenously supplied lipoate to lipoyl-AMP and the transfer of the activated lipoyl onto the lipoyl domains of lipoate-dependent enzymes. This chain is Lipoate-protein ligase A, found in Salmonella typhi.